The chain runs to 151 residues: Trivalent organoarsenical cleaving enzyme (151 aa).

The region spanning 2 to 118 (SRVQLALRVP…GGEPWEVYVV (117 aa)) is the VOC domain. Glutamine 5 is a binding site for Fe(2+). Roxarsone (III) is bound at residue aspartate 61. Histidine 62 is a Fe(2+) binding site. Residues cysteine 95 and cysteine 96 each contribute to the roxarsone (III) site. Glutamate 114 contacts Fe(2+).

As to quaternary structure, monomer. It depends on Fe(2+) as a cofactor.

The catalysed reaction is methylarsonous acid + AH2 + O2 = arsenite + methanol + A + H(+). It carries out the reaction roxarsone (III) + AH2 + O2 = 4-hydroxy-3-nitrocyclohexa-2,5-dien-1-one + arsenite + A + H(+). It catalyses the reaction nitarsone (III) + AH2 + O2 = 4-nitrocyclohexa-2,5-dien-1-one + arsenite + A + H(+). The enzyme catalyses 4-aminophenylarsonous acid + AH2 + O2 = 4-aminocyclohexa-2,5-dien-1-one + arsenite + A. In terms of biological role, nonheme iron-dependent dioxygenase that can break carbon-arsenic bonds, playing a role in the detoxification of environmental organoarsenical compounds. Catalyzes the oxygen-dependent demethylation of highly toxic methylarsonous acid (MAs(III)) to arsenite, which can then be exported out of the cell. Can also cleave the C-As bond in several trivalent aromatic arsenicals, including roxarsone (III), nitarsone (III) and (4-aminophenyl)arsonous acid. Organoarsenical degradation by this enzyme is proposed to have a significant impact on the arsenic biogeocycle that maintains a balance between organic and inorganic species. This Thermomonospora curvata (strain ATCC 19995 / DSM 43183 / JCM 3096 / KCTC 9072 / NBRC 15933 / NCIMB 10081 / Henssen B9) protein is Trivalent organoarsenical cleaving enzyme.